Here is a 262-residue protein sequence, read N- to C-terminus: Apolipoprotein A-I (262 aa).

The signal sequence occupies residues 1 to 18 (MKFLALALTILLAAATQA). The interval 32–63 (VKVAMMEYMAQVKETGQRSIDLLDDTEFKEYK) is 3 X approximate tandem repeats. A run of 2 repeats spans residues 64–85 (VQLS…QSLA) and 87–107 (YSEA…AEVM). The 10 X approximate tandem repeats stretch occupies residues 64-262 (VQLSQSLDNL…YETISQAMKA (199 aa)). Residues 108–118 (KDVEDVRTQLE) form a 3; half-length repeat. 5 consecutive repeat copies span residues 119–140 (PKRA…KKLE), 141–162 (PLIK…VKME), 163–184 (PVVE…AKLM), 185–206 (PIVE…TLAA), and 207–228 (PYAE…EKVG). The 9; half-length repeat unit spans residues 229–239 (PLTNDFKGQVG). Repeat unit 10 spans residues 240–262 (PAAEQAKEKLMDFYETISQAMKA).

Belongs to the apolipoprotein A1/A4/E family.

The protein resides in the secreted. In terms of biological role, participates in the reverse transport of cholesterol from tissues to the liver for excretion by promoting cholesterol efflux from tissues and by acting as a cofactor for the lecithin cholesterol acyltransferase (LCAT). In Salmo trutta (Brown trout), this protein is Apolipoprotein A-I (apoa1).